The chain runs to 180 residues: Ribosome-recycling factor (180 aa).

This sequence belongs to the RRF family.

The protein localises to the cytoplasm. Responsible for the release of ribosomes from messenger RNA at the termination of protein biosynthesis. May increase the efficiency of translation by recycling ribosomes from one round of translation to another. The chain is Ribosome-recycling factor from Chlamydia abortus (strain DSM 27085 / S26/3) (Chlamydophila abortus).